Consider the following 230-residue polypeptide: Ropporin-1-like protein (230 aa).

Residues 17–54 (PELPDILKQFTKAAIRTQPADVLQWSAGYFSALSRGDP) enclose the RIIa domain.

This sequence belongs to the ropporin family. Component of the axonemal radial spoke complex 1 (RS1), at least composed of spoke head proteins RSPH1, RSPH3, RSPH9 and the cilia-specific component RSPH4A or sperm-specific component RSPH6A, spoke stalk proteins RSPH14, DNAJB13, DYDC1, ROPN1L and NME5, and the anchor protein IQUB. May interact with AKAP3. Interacts with FSCB; the interaction increases upon spermatozoa capacitation conditions. Interacts with CFAP61. Post-translationally, sumoylated, sumoylation decreases upon spermatozoa capacitation conditions.

It localises to the cell projection. The protein resides in the cilium. Its subcellular location is the flagellum. Its function is as follows. Functions as part of axonemal radial spoke complexes that play an important part in the motility of sperm and cilia. Important for male fertility. With ROPN1, involved in fibrous sheath integrity and sperm motility, plays a role in PKA-dependent signaling processes required for spermatozoa capacitation. This is Ropporin-1-like protein (ROPN1L) from Macaca fascicularis (Crab-eating macaque).